We begin with the raw amino-acid sequence, 616 residues long: Cytochrome c oxidase subunit 1 (616 aa).

The helical transmembrane segment at 28 to 48 (HLYLISGGFFFLLGGLEALFI) threads the bilayer. Histidine 72 provides a ligand contact to Fe(II)-heme a. 6 consecutive transmembrane segments (helical) span residues 75-95 (TMIFLAAMPLVFAFMNAVVPL), 102-122 (VAFPFLNALGFWMFFFGGLFL), 158-178 (GLQISGFGTIMGAINFLVTII), 198-218 (FVTSALILFAFPPLTVGLIFM), 243-263 (LFWVFGHPEVYILVLPAFGIF), and 275-295 (LFGYSSMVFATVLIAFLGFMV). Histidine 249 and tyrosine 253 together coordinate Cu cation. A cross-link (1'-histidyl-3'-tyrosine (His-Tyr)) is located at residues 249–253 (HPEVY). 2 residues coordinate Cu cation: histidine 298 and histidine 299. Helical transmembrane passes span 303-323 (VGMGPIANAIFAVATMTIAVP), 349-369 (AVAFIPSFVMGGVTGVMLASA), 380-400 (FVVAHFHYVIVGGVVFALLAG), 420-440 (ITFWLFFIGFHLTFFIQHFLG), 463-483 (ISTIGAFFIAAATVILLINIV), 553-573 (SSFLPFVIAFGLFVAAFGFTY), and 577-597 (AGWGLPVAILGLLITLGSMFL). Position 384 (histidine 384) interacts with Fe(II)-heme o. Histidine 384 is a heme a3 binding site. Histidine 386 provides a ligand contact to Fe(II)-heme a.

This sequence belongs to the heme-copper respiratory oxidase family. Cu(2+) is required as a cofactor. Requires heme as cofactor.

It localises to the cell membrane. It catalyses the reaction 4 Fe(II)-[cytochrome c] + O2 + 8 H(+)(in) = 4 Fe(III)-[cytochrome c] + 2 H2O + 4 H(+)(out). It participates in energy metabolism; oxidative phosphorylation. Its function is as follows. Cytochrome c oxidase is the component of the respiratory chain that catalyzes the reduction of oxygen to water. Subunits 1-3 form the functional core of the enzyme complex. Co I is the catalytic subunit of the enzyme. Electrons originating in cytochrome c are transferred via the copper A center of subunit 2 and heme a of subunit 1 to the bimetallic center formed by heme a3 and copper B. This cytochrome c oxidase shows proton pump activity across the membrane in addition to the electron transfer. The chain is Cytochrome c oxidase subunit 1 (ctaD) from Bacillus sp. (strain PS3).